The primary structure comprises 512 residues: Sucrose-6-phosphate hydrolase (512 aa).

Substrate-binding positions include 40–43, Gln59, Trp67, 102–103, 165–166, Glu229, and Trp311; these read WMND, FS, and RD. Asp43 is a catalytic residue.

This sequence belongs to the glycosyl hydrolase 32 family.

The protein localises to the cytoplasm. It catalyses the reaction Hydrolysis of terminal non-reducing beta-D-fructofuranoside residues in beta-D-fructofuranosides.. It functions in the pathway glycan biosynthesis; sucrose metabolism. The sequence is that of Sucrose-6-phosphate hydrolase (sacA) from Zymomonas mobilis subsp. mobilis (strain ATCC 31821 / ZM4 / CP4).